Consider the following 274-residue polypeptide: HTH-type transcriptional regulator GadX (274 aa).

Residues 145–242 (TRVCTVINNN…GMTPTEYQER (98 aa)) enclose the HTH araC/xylS-type domain. 2 consecutive DNA-binding regions (H-T-H motif) follow at residues 162 to 183 (ARIA…REEE) and 209 to 232 (IKRV…RNYY).

Homodimer.

In terms of biological role, positively regulates the expression of about fifteen genes involved in acid resistance such as gadA, gadB and gadC. Depending on the conditions (growth phase and medium), can repress gadW. The polypeptide is HTH-type transcriptional regulator GadX (gadX) (Shigella flexneri).